The following is a 369-amino-acid chain: MRPETQSAVTQLDSTLTTIEKVMNPEDLESRVRELEQQASDPTLWDDPDTAQKVTTELSSVQAKLKKLSTLRQRIDDLPVMYELADEEGEDALALADEELAELTADVEALEVKTMLSGEYDSREAVINIRSGAGGVDAADWAEMLMRMYIRWAEKNDHKVDIYDISYAEEAGIKSATFVVHGEYMYGQLSVEQGAHRLVRISPFDNQGRRQTSFAEIEVLPVVEQTDHIDIPDSEVRVDVYRSSGPGGQSVNTTDSAVRLTHIPTGIVVTCQNEKSQIQNKASAMRVLQAKLLERKRQEERAELDALGAGGNASWGNQMRSYVLHPYQMVKDLRTNYEVNDPQKVLDGDIDGLLEAGIRWRMAEQQGQN.

Position 249 is an N5-methylglutamine (Q249).

It belongs to the prokaryotic/mitochondrial release factor family. In terms of processing, methylated by PrmC. Methylation increases the termination efficiency of RF2.

It localises to the cytoplasm. In terms of biological role, peptide chain release factor 2 directs the termination of translation in response to the peptide chain termination codons UGA and UAA. The chain is Peptide chain release factor 2 from Corynebacterium diphtheriae (strain ATCC 700971 / NCTC 13129 / Biotype gravis).